A 262-amino-acid polypeptide reads, in one-letter code: Acyl-[acyl-carrier-protein]--UDP-N-acetylglucosamine O-acyltransferase (262 aa).

Belongs to the transferase hexapeptide repeat family. LpxA subfamily. In terms of assembly, homotrimer.

It localises to the cytoplasm. It carries out the reaction a (3R)-hydroxyacyl-[ACP] + UDP-N-acetyl-alpha-D-glucosamine = a UDP-3-O-[(3R)-3-hydroxyacyl]-N-acetyl-alpha-D-glucosamine + holo-[ACP]. It participates in glycolipid biosynthesis; lipid IV(A) biosynthesis; lipid IV(A) from (3R)-3-hydroxytetradecanoyl-[acyl-carrier-protein] and UDP-N-acetyl-alpha-D-glucosamine: step 1/6. Functionally, involved in the biosynthesis of lipid A, a phosphorylated glycolipid that anchors the lipopolysaccharide to the outer membrane of the cell. This is Acyl-[acyl-carrier-protein]--UDP-N-acetylglucosamine O-acyltransferase from Yersinia enterocolitica.